The following is a 270-amino-acid chain: Checkpoint signal transducer rad24 (270 aa).

Phosphoserine occurs at positions 34 and 66. Residues 242 to 270 form a disordered region; that stretch reads AAAGGNTEGAQENAPSNAPEGEAEPKADA.

Belongs to the 14-3-3 family. In terms of assembly, homodimer. Binds preferentially to mei2 phosphorylated by ran1/pat1. Binds preferentially to cdc25 phosphorylated by srk1 during G2; the interaction is increased during osmotic stress. Interacts with byr2. Interacts with rad25.

It is found in the cytoplasm. Its function is as follows. Acts in cell cycle and stress checkpoint signaling by sequestering signal transducers regulated by the checkpoints. Required for the DNA damage checkpoint that ensures that DNA damage is repaired before mitosis is attempted. During environmental stress, sequesters srk1-phosphorylated cdc25 in the cytoplasm to delay the G2/M transition. Sequesters byr2 in the cytoplasm to prevent its translocation to the plasma membrane. Sequesters ran1/pat1-phosphorylated mei2 from its non-coding RNA activators (including meiRNA), to prevent meiotic induction in vegetative cells and to regulate meiosis I. The protein is Checkpoint signal transducer rad24 of Schizosaccharomyces pombe (strain 972 / ATCC 24843) (Fission yeast).